Here is a 187-residue protein sequence, read N- to C-terminus: ATP-dependent protease subunit HslV (187 aa).

The active site involves Thr-7. Positions 162, 165, and 168 each coordinate Na(+).

It belongs to the peptidase T1B family. HslV subfamily. In terms of assembly, a double ring-shaped homohexamer of HslV is capped on each side by a ring-shaped HslU homohexamer. The assembly of the HslU/HslV complex is dependent on binding of ATP.

Its subcellular location is the cytoplasm. The catalysed reaction is ATP-dependent cleavage of peptide bonds with broad specificity.. Allosterically activated by HslU binding. Functionally, protease subunit of a proteasome-like degradation complex believed to be a general protein degrading machinery. The polypeptide is ATP-dependent protease subunit HslV (Methylococcus capsulatus (strain ATCC 33009 / NCIMB 11132 / Bath)).